A 297-amino-acid polypeptide reads, in one-letter code: Taste receptor type 2 member 4 (297 aa).

The Extracellular portion of the chain corresponds to 1 to 11; it reads MLWELYVFVFA. Residues 12 to 32 traverse the membrane as a helical segment; sequence ASVFLNFVGIIANLFIIVIII. The Cytoplasmic segment spans residues 33-46; the sequence is KTWVNSRRIASPDR. The helical transmembrane segment at 47-67 threads the bilayer; it reads ILFSLAITRFLTLGLFLLNSV. The Extracellular portion of the chain corresponds to 68 to 80; sequence YIATNTGRSVYFS. The chain crosses the membrane as a helical span at residues 81–101; the sequence is TFFLLCWKFLDANSLWLVTIL. The Cytoplasmic portion of the chain corresponds to 102–128; it reads NSLYCVKITNFQHPVFLLLKRTISMKT. A helical membrane pass occupies residues 129 to 149; it reads TSLLLACLLISALTTLLYYML. Over 150–171 the chain is Extracellular; that stretch reads SQISRFPEHIIGRNDTSFDLSD. N-linked (GlcNAc...) asparagine glycosylation is present at N163. A helical transmembrane segment spans residues 172–192; it reads GILTLVASLVLNSLLQFMLNV. Over 193 to 229 the chain is Cytoplasmic; sequence TFASLLIHSLRRHIQKMQRNRTSFWNPQTEAHMGAMR. A helical transmembrane segment spans residues 230-250; sequence LMICFLVLYIPYSIATLLYLP. Over 251–260 the chain is Extracellular; it reads SYMRKNLRAQ. Residues 261 to 281 traverse the membrane as a helical segment; the sequence is AICMIITAAYPPGHSVLLIIT. At 282–297 the chain is on the cytoplasmic side; the sequence is HHKLKAKAKKIFCFYK.

This sequence belongs to the G-protein coupled receptor T2R family. In terms of tissue distribution, expressed in subsets of taste receptor cells of the tongue and palate epithelium and exclusively in gustducin-positive cells. Expressed in 15% taste bud cells in circumvallate and foliate papillae but only in 2% in fungiform papillae.

The protein resides in the membrane. Its subcellular location is the cell projection. It localises to the cilium membrane. In terms of biological role, gustducin-coupled receptor for denatonium and N(6)-propyl-2-thiouracil implicated in the perception of bitter compounds in the oral cavity and the gastrointestinal tract. Signals through PLCB2 and the calcium-regulated cation channel TRPM5. In airway epithelial cells, binding of denatonium increases the intracellular calcium ion concentration and stimulates ciliary beat frequency. The protein is Taste receptor type 2 member 4 (Tas2r4) of Mus musculus (Mouse).